Reading from the N-terminus, the 402-residue chain is Putative RNA-guided DNA endonuclease InsQ (402 aa).

Residues aspartate 183 and glutamate 267 contribute to the active site. Residues cysteine 334, cysteine 337, cysteine 353, and cysteine 356 each contribute to the Zn(2+) site. Residue aspartate 363 is part of the active site.

The protein in the N-terminal section; belongs to the transposase 2 family. It in the C-terminal section; belongs to the transposase 35 family.

An RNA-guided dsDNA endonuclease. When guided by an RNA derived from the right-end element of its insertion sequence element (IS), cleaves DNA downstream of the transposon-associated motif (TAM). Cleaves supercoiled and linear DNA in a staggered manner 15-21 bases from the TAM yielding 5'-overhangs. Binds reRNA, an approximately 150 nucleotide base sRNA derived from the 3' end of its own gene, the right end (RE) of the insertion sequence (IS) plus sequence downstream of the IS. Functionally, not required for transposition of the insertion element. The corresponding transposase in strains MG1655 and W3110 is a truncated pseudogene (yncK). In Escherichia coli (strain K12), this protein is Putative RNA-guided DNA endonuclease InsQ (insQ).